We begin with the raw amino-acid sequence, 816 residues long: MDVVQQKQDKQLQHQTQEQQQIREDQQEVPPQRPRQQNRWKPWWNSTADDEPNTGRIAEYPNGQGRSSPTTDFQDSVNSNNDNKGIWSKIASFATSRYRSAPIVVDDNTRYSQLNTEQINFLENEAKDIISKKSKSWCWYEAIPHISNSSNIIDSIDTPGIISVSGTGSAKCPLPLNKYPGEGGNPGYNVFINDSLILPSDNPLNFLHVQPLRTKVLNTIKNYYNFPNEQHLYLRQKKTALLKDKRIIIISVVGDLPEKYEQRSLESQRSAYYLSRKLSQNLAQEQPQRVLTLSFQCPLHNQDLIPTYKECVELLNHWAHLFKEVDSIFFVGVYHSVPLTLLLAKYIVQNNEVLEFDENTTVSVLSFQSCLQGYRFWDHSTDFTSNSYNNLGSNSSTNENDSNDHDSNNDFTTKSQQIKEKQLFQGIDKKQQDTLSKIKNYRRIDSSESKLVQDALDWLLFNWDTFRLTFFGKLYDNFMTISEKLAIDYNHPKILRNLWCNGKYMGIDLKNANNLNLDTDDEATSNINDVHVRTPNFESRLKIPTNRLFEITLWDILMITENLGYKQFIPIINLLSPFFISRSFNDYTLPPNIRKQYQNSNKIWLQEMDSKWKMNGHQLNYDQREGESLGSSSESLLPENISTVKDFLQFVQYQNEKSSDFVRIYSDIYDDDKVYKCFLYNTIFTKNPLSRKHLRLNIDLDTPTSILNTVNQYDLVWKIHDSFSKLIQLKNLPQREIPHALRLSISLNCFLDSTTSTSGPVFQRDTVEALRRLTEIWRTYQDWSPPTRGLKHLRDILSVLAMYDNPKNLINDVRRT.

Disordered regions lie at residues 1–81 (MDVV…NSNN) and 391–411 (LGSN…NNDF). Residues 28 to 44 (EVPPQRPRQQNRWKPWW) show a composition bias toward low complexity. Over residues 64–81 (QGRSSPTTDFQDSVNSNN) the composition is skewed to polar residues. Ser-76 and Ser-79 each carry phosphoserine. Positions 391 to 400 (LGSNSSTNEN) are enriched in low complexity.

This is an uncharacterized protein from Saccharomyces cerevisiae (strain ATCC 204508 / S288c) (Baker's yeast).